The chain runs to 408 residues: Glutamate N-acetyltransferase (408 aa).

Residues Thr-150, Lys-176, Thr-189, Glu-271, Asn-403, and Thr-408 each coordinate substrate. Thr-189 serves as the catalytic Nucleophile.

The protein belongs to the ArgJ family. As to quaternary structure, heterotetramer of two alpha and two beta chains.

It is found in the cytoplasm. The catalysed reaction is N(2)-acetyl-L-ornithine + L-glutamate = N-acetyl-L-glutamate + L-ornithine. It participates in amino-acid biosynthesis; L-arginine biosynthesis; L-ornithine and N-acetyl-L-glutamate from L-glutamate and N(2)-acetyl-L-ornithine (cyclic): step 1/1. Its function is as follows. Catalyzes the transfer of the acetyl group from N(2)-acetylornithine to glutamate, forming N-acetylglutamate and L-ornithine. This is Glutamate N-acetyltransferase from Methanococcus maripaludis (strain DSM 14266 / JCM 13030 / NBRC 101832 / S2 / LL).